A 629-amino-acid polypeptide reads, in one-letter code: tRNA uridine 5-carboxymethylaminomethyl modification enzyme MnmG (629 aa).

Residues 13 to 18 (GGGHAG), Val125, and Ser180 each bind FAD. 273–287 (GPRYCPSIEDKVMRF) is an NAD(+) binding site. Position 370 (Gln370) interacts with FAD.

It belongs to the MnmG family. As to quaternary structure, homodimer. Heterotetramer of two MnmE and two MnmG subunits. FAD is required as a cofactor.

The protein localises to the cytoplasm. In terms of biological role, NAD-binding protein involved in the addition of a carboxymethylaminomethyl (cmnm) group at the wobble position (U34) of certain tRNAs, forming tRNA-cmnm(5)s(2)U34. The protein is tRNA uridine 5-carboxymethylaminomethyl modification enzyme MnmG of Salmonella schwarzengrund (strain CVM19633).